Here is a 1299-residue protein sequence, read N- to C-terminus: Sophorolipid transporter (1299 aa).

The Cytoplasmic portion of the chain corresponds to 1–64 (MVDDIQVEKR…FCTPLDVFLE (64 aa)). A helical membrane pass occupies residues 65–85 (ILALFFAAVHGAALPMFTLVV). The ABC transmembrane type-1 1 domain occupies 65–356 (ILALFFAAVH…IAPNVRFLVK (292 aa)). Residues 86–114 (GAIFNTFRDFTSYDLKGNEFQHKVNHLSL) lie on the Extracellular side of the membrane. A helical membrane pass occupies residues 115–135 (YFVYIGIGMLGSAFLESFLLV). The Cytoplasmic portion of the chain corresponds to 136-187 (DRGEVLAGRYRKHYLSAVIRQNIAFYDKLGGGEVSTRIINDTNSIQEAISDK). A helical membrane pass occupies residues 188 to 208 (LGNVVQGIASFIAATVISFAS). The Extracellular portion of the chain corresponds to 209-214 (QWKLAC). The chain crosses the membrane as a helical span at residues 215 to 235 (ILLSAVGFMVITMGTGATFMA). Over 236–293 (KYQLRSDAIYSQSGATVAEEALSAVRTTVAFGAQPHLAVKYEKVLDRVVKESKRSSYS) the chain is Cytoplasmic. A helical transmembrane segment spans residues 294–314 (LGVMLACIWASTFWVYALALW). The Extracellular segment spans residues 315-326 (QGSREIVSGSAD). The chain crosses the membrane as a helical span at residues 327-347 (VGKIIVVITAMLLGSFQLGNI). The Cytoplasmic segment spans residues 348-725 (APNVRFLVKG…WGLNRKEWGY (378 aa)). The ABC transporter 1 domain occupies 393-638 (IELKNVKFRY…EGPYKALVDA (246 aa)). Residue 428-435 (GASGSGKS) participates in ATP binding. Residues 681-690 (SAGTQTTQPP) are compositionally biased toward polar residues. Residues 681–703 (SAGTQTTQPPEYQENDIPGVRNP) are disordered. A helical membrane pass occupies residues 726–746 (ILIGSLASIILGYCYPAMAII). The ABC transmembrane type-1 2 domain maps to 727–1016 (LIGSLASIIL…IFSYAPNMNS (290 aa)). Residues 747 to 769 (TGQTTGSMVLPPSEYGKMRHVVN) lie on the Extracellular side of the membrane. Residues 770–790 (IMGWWYFFVGCISFMTAFITI) traverse the membrane as a helical segment. Topologically, residues 791–848 (AALSLASDKLVKNIRLALFRQLMRMDIAFFDHKNNTPGALTSILAKEAKMIEGLSGAT) are cytoplasmic. A helical transmembrane segment spans residues 849–869 (LGQIQQSLVTLIGGIVTGIPF). The Extracellular portion of the chain corresponds to 870-874 (NWRIG). Residues 875-895 (LVATSVVPVMLVCGFVRVWVL) form a helical membrane-spanning segment. The Cytoplasmic portion of the chain corresponds to 896–954 (TQLSDRAREVYERSGSMASEYTSAVRTVQSLTRELDVVVKYTKTVDSQIFSSRIAIARS). The helical transmembrane segment at 955–975 (ALYYALSEGMTPWVVALVFWW) threads the bilayer. Residues 976-987 (GSTVMRRGEASV) are Extracellular-facing. The chain crosses the membrane as a helical span at residues 988 to 1008 (AGYMTVFMAIITGSQAAGQIF). The Cytoplasmic portion of the chain corresponds to 1009–1299 (SYAPNMNSAK…LVNLQGLGEI (291 aa)). The region spanning 1053 to 1293 (IEFRHVNFRY…NGWYAELVNL (241 aa)) is the ABC transporter 2 domain. 1088-1095 (GASGCGKS) contacts ATP.

The protein belongs to the ABC transporter superfamily. ABCB family. Multidrug resistance exporter (TC 3.A.1.201) subfamily.

It is found in the cell membrane. Transports acidic acylated and non-acylated sophorolipids (SLs) into the extracellular space, where they can be lactonized by lactone esterase. The chain is Sophorolipid transporter (mdr) from Starmerella bombicola (Yeast).